The chain runs to 335 residues: Replication factor C subunit 4 (335 aa).

Residue 56-63 coordinates ATP; the sequence is SGPPGTGK.

The protein belongs to the activator 1 small subunits family. In terms of assembly, heterotetramer of subunits RFC2, RFC3, RFC4 and RFC5 that can form a complex with RFC1. As to expression, expressed in roots, leaves, shoot apical meristem (SAM), flag leaves and panicles.

It is found in the nucleus. Functionally, may be involved in DNA replication and thus regulate cell proliferation. This chain is Replication factor C subunit 4 (RFC4), found in Oryza sativa subsp. japonica (Rice).